Reading from the N-terminus, the 921-residue chain is MRSLLFVLSLICFCSQTALSWKKEEFRSCDQTPFCKRARSRTPGACSLIVGDVSITDGDLVAKLLPKAPNQGDGDQIKPLILSLSVYKDGIVRLKIDEDHSLNPPKKRFQVPDVVVSEFEEKKIWLQKVATETISGDTSPSSVVYVSDGYEAVVRHDPFEVYVREKSGDRRRVVSLNSHGLFDFEQLGRKTEGDNWEEKFRTHTDSRPSGPQSISFDVSFYDSSFVYGIPEHATSFALKPTKGPGVEESEPYRLFNLDVFEYDHESPFGLYGSIPFMVSHGKSGKTSGFFWLNAAEMQIDVLANGWDAESGISLPSSHSRIDTFWMSEAGIVDTFFFVGPEPKDVVKQYASVTGTSAMPQLFATGYHQCRWNYKDEEDVAQVDSKFDEHDIPYDVLWLDIEHTDGKRYFTWDSVLFPHPEEMQKKLAAKGRKMVTIVDPHIKRDDSYFLHKEATQMGYYVKDSSGKDFDGWCWPGSSSYIDMLSPEIRKWWGGRFSYKNYVGSTPSLYTWNDMNEPSVFNGPEVTMPRDALHVGGVEHREVHNAYGYYFHMATSDGLVMREEGKDRPFVLSRAIFPGTQRYGAIWTGDNTAEWEHLRVSIPMILTLGLTGITFSGADIGGFFGNPEPELLVRWYQVGAYYPFFRGHAHHDTKRREPWLFGERNTELMRDAIHTRYTLLPYFYTLFREANVTGVPVVRPLWMEFPQDEATFSNDEAFMVGSGLLVQGVYTKGTTQASVYLPGKESWYDLRNGKTYVGGKTHKMDAPEESIPAFQKAGTIIPRKDRFRRSSSQMDNDPYTLVVALNSSQEAEGELYIDDGKSFEFRRGSYIHRRFVFSKGVLTSTNLAPPEARLSSQCLIDRIILLGHSSGPKSALVEPLNQKAEIEMGPLRMGGLVASSGTKVLTIRKPGVRVDQDWTVKIL.

An N-terminal signal peptide occupies residues 1-20 (MRSLLFVLSLICFCSQTALS). The Nucleophile role is filled by Asp-512. Residue Glu-515 is part of the active site. Asp-588 serves as the catalytic Proton donor. N-linked (GlcNAc...) asparagine glycosylation is found at Asn-689 and Asn-804.

This sequence belongs to the glycosyl hydrolase 31 family. Heterodimer of a catalytic alpha subunit (PSL5) and a beta subunit (PSL4). As to expression, expressed in roots, rosette leaves, leaf blades, mature stems, cauline leaves, flower buds, flowers and siliques.

The protein localises to the endoplasmic reticulum. The catalysed reaction is Hydrolysis of terminal (1-&gt;3)-alpha-D-glucosidic links in (1-&gt;3)-alpha-D-glucans.. Its pathway is glycan metabolism; N-glycan metabolism. Cleaves sequentially the 2 innermost alpha-1,3-linked glucose residues from the Glc(2)Man(9)GlcNAc(2) oligosaccharide precursor of immature glycoproteins. Essential for stable accumulation of the receptor EFR that determines the specific perception of bacterial elongation factor Tu (EF-Tu), a potent elicitor of the defense response to pathogen-associated molecular patterns (PAMPs). Required for sustained activation of EFR-mediated signaling, but not receptor FLS2-mediated signaling elicited by the bacterial flagellin flg22. This chain is Probable glucan 1,3-alpha-glucosidase (PSL5), found in Arabidopsis thaliana (Mouse-ear cress).